The following is a 763-amino-acid chain: MKRDFDEISEEEWSQHSFNASRVLKRPRTPKKTRAATNPTPSIESFAFRRPSTAMTIESNSSDGDCVEIEDLGDSDSDVKIVNGEDLLLEDEEEVEETKVVMRAARVGRRFVIEDEEASDDDDDEAESSASEDEFGGGGGGSGGRRGEDEDVVGKALQKCAKISADLRKELYGTSSGVTDRYSEVETSTVRIVTQNDIDDACKAEDSDFQPILKPYQLVGVNFLLLLYKKGIEGAILADEMGLGKTIQAITYLTLLSRLNNDPGPHLVVCPASVLENWERELRKWCPSFTVLQYHGAARAAYSRELNSLSKAGKPPPFNVLLVCYSLFERHSEQQKDDRKVLKRWRWSCVLMDEAHALKDKNSYRWKNLMSVARNANQRLMLTGTPLQNDLHELWSLLEFMLPDIFTTENVDLKKLLNAEDTELITRMKSILGPFILRRLKSDVMQQLVPKIQRVEYVLMERKQEDAYKEAIEEYRAASQARLVKLSSKSLNSLAKALPKRQISNYFTQFRKIANHPLLIRRIYSDEDVIRIARKLHPIGAFGFECSLDRVIEEVKGFNDFRIHQLLFQYGVNDTKGTLSDKHVMLSAKCRTLAELLPSMKKSGHRVLIFSQWTSMLDILEWTLDVIGVTYRRLDGSTQVTDRQTIVDTFNNDKSIFACLLSTRAGGQGLNLTGADTVIIHDMDFNPQIDRQAEDRCHRIGQTKPVTIFRLVTKSTVDENIYEIAKRKLVLDAAVLESGVHVDDNGDTPEKTMGEILASLLMG.

Disordered regions lie at residues 1 to 43 (MKRD…TPSI) and 114 to 149 (EDEE…RGED). Residues 23–34 (VLKRPRTPKKTR) show a composition bias toward basic residues. Residues 114-135 (EDEEASDDDDDEAESSASEDEF) show a composition bias toward acidic residues. The Helicase ATP-binding domain maps to 226-404 (LLYKKGIEGA…WSLLEFMLPD (179 aa)). Residue 239 to 246 (DEMGLGKT) coordinates ATP. The DEAH box motif lies at 353 to 356 (DEAH). Residues 462–482 (RKQEDAYKEAIEEYRAASQAR) are a coiled coil. The Nuclear localization signal motif lies at 520–527 (IRRIYSDE). The region spanning 592 to 742 (TLAELLPSMK…AAVLESGVHV (151 aa)) is the Helicase C-terminal domain.

It belongs to the SNF2/RAD54 helicase family. As to quaternary structure, interacts with SUVR2 and itself.

The protein resides in the nucleus. Functionally, DNA helicase that possesses intrinsic ATP-dependent nucleosome-remodeling activity and is both required for DNA repair and heterochromatin organization. Promotes DNA end resection of double-strand breaks (DSBs) following DNA damage: probably acts by weakening histone DNA interactions in nucleosomes flanking DSBs. Probable chromatin remodeling factor. Probable helicase-like transcription factor involved in transcriptional gene silencing. Associates with SUVR2 and contributes to transcriptional gene silencing at RNA-directed DNA methylation (RdDM) target loci but also at RdDM-independent target loci. May be involved in nucleosome positioning to form ordered nucleosome arrays on chromatin. The chain is Protein CHROMATIN REMODELING 19 from Arabidopsis thaliana (Mouse-ear cress).